The primary structure comprises 175 residues: Nucleoside triphosphate/diphosphate phosphatase (175 aa).

Arginine 23 functions as the Proton donor in the catalytic mechanism. Mg(2+)-binding residues include asparagine 87, aspartate 103, aspartate 105, aspartate 107, aspartate 120, and glutamate 123.

Belongs to the Ntdp family. Mg(2+) is required as a cofactor.

It carries out the reaction a ribonucleoside 5'-triphosphate + H2O = a ribonucleoside 5'-diphosphate + phosphate + H(+). It catalyses the reaction a ribonucleoside 5'-diphosphate + H2O = a ribonucleoside 5'-phosphate + phosphate + H(+). Functionally, has nucleoside phosphatase activity towards nucleoside triphosphates and nucleoside diphosphates. This is Nucleoside triphosphate/diphosphate phosphatase from Halalkalibacterium halodurans (strain ATCC BAA-125 / DSM 18197 / FERM 7344 / JCM 9153 / C-125) (Bacillus halodurans).